We begin with the raw amino-acid sequence, 305 residues long: NAD kinase 2 (305 aa).

Asp78 acts as the Proton acceptor in catalysis. NAD(+) contacts are provided by residues 78 to 79, 152 to 153, Asp182, 193 to 198, and Asn251; these read DG, NE, and TAYSLS.

The protein belongs to the NAD kinase family. A divalent metal cation serves as cofactor.

It is found in the cytoplasm. It carries out the reaction NAD(+) + ATP = ADP + NADP(+) + H(+). Involved in the regulation of the intracellular balance of NAD and NADP, and is a key enzyme in the biosynthesis of NADP. Catalyzes specifically the phosphorylation on 2'-hydroxyl of the adenosine moiety of NAD to yield NADP. The polypeptide is NAD kinase 2 (Synechococcus sp. (strain ATCC 27144 / PCC 6301 / SAUG 1402/1) (Anacystis nidulans)).